The primary structure comprises 73 residues: Protein SlyX homolog (73 aa).

The protein belongs to the SlyX family.

In Actinobacillus pleuropneumoniae serotype 5b (strain L20), this protein is Protein SlyX homolog.